The chain runs to 243 residues: 3-deoxy-manno-octulosonate cytidylyltransferase (243 aa).

This sequence belongs to the KdsB family.

It is found in the cytoplasm. It catalyses the reaction 3-deoxy-alpha-D-manno-oct-2-ulosonate + CTP = CMP-3-deoxy-beta-D-manno-octulosonate + diphosphate. Its pathway is nucleotide-sugar biosynthesis; CMP-3-deoxy-D-manno-octulosonate biosynthesis; CMP-3-deoxy-D-manno-octulosonate from 3-deoxy-D-manno-octulosonate and CTP: step 1/1. It participates in bacterial outer membrane biogenesis; lipopolysaccharide biosynthesis. Its function is as follows. Activates KDO (a required 8-carbon sugar) for incorporation into bacterial lipopolysaccharide in Gram-negative bacteria. The chain is 3-deoxy-manno-octulosonate cytidylyltransferase from Bartonella quintana (strain Toulouse) (Rochalimaea quintana).